Reading from the N-terminus, the 214-residue chain is Phosphatidylserine decarboxylase proenzyme (214 aa).

Catalysis depends on serine 183, which acts as the Schiff-base intermediate with substrate; via pyruvic acid. Serine 183 bears the Pyruvic acid (Ser); by autocatalysis mark.

It belongs to the phosphatidylserine decarboxylase family. PSD-A subfamily. As to quaternary structure, heterodimer of a large membrane-associated beta subunit and a small pyruvoyl-containing alpha subunit. Requires pyruvate as cofactor. Is synthesized initially as an inactive proenzyme. Formation of the active enzyme involves a self-maturation process in which the active site pyruvoyl group is generated from an internal serine residue via an autocatalytic post-translational modification. Two non-identical subunits are generated from the proenzyme in this reaction, and the pyruvate is formed at the N-terminus of the alpha chain, which is derived from the carboxyl end of the proenzyme. The post-translation cleavage follows an unusual pathway, termed non-hydrolytic serinolysis, in which the side chain hydroxyl group of the serine supplies its oxygen atom to form the C-terminus of the beta chain, while the remainder of the serine residue undergoes an oxidative deamination to produce ammonia and the pyruvoyl prosthetic group on the alpha chain.

The protein resides in the cell membrane. The enzyme catalyses a 1,2-diacyl-sn-glycero-3-phospho-L-serine + H(+) = a 1,2-diacyl-sn-glycero-3-phosphoethanolamine + CO2. It participates in phospholipid metabolism; phosphatidylethanolamine biosynthesis; phosphatidylethanolamine from CDP-diacylglycerol: step 2/2. Its function is as follows. Catalyzes the formation of phosphatidylethanolamine (PtdEtn) from phosphatidylserine (PtdSer). This chain is Phosphatidylserine decarboxylase proenzyme, found in Desulfotalea psychrophila (strain LSv54 / DSM 12343).